The primary structure comprises 380 residues: MTATLTPTLELAFDLIRRPSVTPVDEGCQELMMRRLAACGFEVERMRIEEVENFWAKRGGDGPVLCFAGHTDVVPTGPLDAWQYQPFDVRVDEEGMLCGRGAADMKGSLASMIVAVERFVADYPNHRGAISFLITSDEEGPAQHGTKAVVERLRERSERLDWCIVGEPSSTTLLGDVVKNGRRGSLGCTLTVYGKQGHVAYPHLAKNPIHLAAPALAELAAEHWDHGNDYFPPTSFQVSNLNSGTGATNVIPGELKAVFNFRFSTESTVEGLQQRVTAILDKHGLDYHLEWALSGLPFLTQPGELLDAVAASIKNVTGRDTTPSTSGGTSDGRFIATLGTQVVELGPVNATIHQINERVLASDLDLLTEVYYQTMVKLLA.

His-70 is a binding site for Zn(2+). Asp-72 is a catalytic residue. Asp-104 contributes to the Zn(2+) binding site. Glu-138 serves as the catalytic Proton acceptor. Zn(2+) contacts are provided by Glu-139, Glu-167, and His-353.

This sequence belongs to the peptidase M20A family. DapE subfamily. As to quaternary structure, homodimer. It depends on Zn(2+) as a cofactor. Co(2+) serves as cofactor.

The catalysed reaction is N-succinyl-(2S,6S)-2,6-diaminopimelate + H2O = (2S,6S)-2,6-diaminopimelate + succinate. It functions in the pathway amino-acid biosynthesis; L-lysine biosynthesis via DAP pathway; LL-2,6-diaminopimelate from (S)-tetrahydrodipicolinate (succinylase route): step 3/3. In terms of biological role, catalyzes the hydrolysis of N-succinyl-L,L-diaminopimelic acid (SDAP), forming succinate and LL-2,6-diaminopimelate (DAP), an intermediate involved in the bacterial biosynthesis of lysine and meso-diaminopimelic acid, an essential component of bacterial cell walls. This is Succinyl-diaminopimelate desuccinylase from Ectopseudomonas mendocina (strain ymp) (Pseudomonas mendocina).